A 544-amino-acid chain; its full sequence is Pyruvate kinase (544 aa).

Arginine 31 provides a ligand contact to substrate. Asparagine 33 and aspartate 61 together coordinate K(+). Position 33–36 (33–36 (NSAH)) interacts with ATP. Position 68 (arginine 68) interacts with ATP. Residue glutamate 204 participates in Mg(2+) binding. The substrate site is built by glycine 227, aspartate 228, and threonine 260. Residue aspartate 228 coordinates Mg(2+).

Belongs to the pyruvate kinase family. Homotetramer. It depends on Mg(2+) as a cofactor. The cofactor is K(+).

It carries out the reaction pyruvate + ATP = phosphoenolpyruvate + ADP + H(+). It functions in the pathway carbohydrate degradation; glycolysis; pyruvate from D-glyceraldehyde 3-phosphate: step 5/5. The sequence is that of Pyruvate kinase from Thermoplasma acidophilum (strain ATCC 25905 / DSM 1728 / JCM 9062 / NBRC 15155 / AMRC-C165).